Consider the following 204-residue polypeptide: Cysteine-rich protein 3 (204 aa).

The LIM zinc-binding 1 domain maps to 3-64 (WTCPRCQQPV…KPCYGALFGP (62 aa)). Residues 88–107 (ISLSPSNFSPPRPRTGLSRA) are disordered. The LIM zinc-binding 2 domain maps to 122–183 (SLCPGCGDPV…IPCYGYLFGP (62 aa)).

As to expression, expressed specifically by the thymus.

It is found in the cytoplasm. The sequence is that of Cysteine-rich protein 3 (Crip3) from Mus musculus (Mouse).